Reading from the N-terminus, the 899-residue chain is Translation initiation factor IF-2 (899 aa).

Disordered regions lie at residues 31–227 (KKAE…ATEQ) and 240–310 (VTTS…GFDK). Composition is skewed to polar residues over residues 36 to 47 (NVSQTEKQSLLS) and 73 to 87 (STLS…SKSV). 3 stretches are compositionally biased toward basic and acidic residues: residues 101-173 (SALE…EKAK), 181-219 (AKSE…ETNE), and 247-261 (RAAE…ETTG). Over residues 296-308 (PQVNAPTSMQQGF) the composition is skewed to polar residues. The region spanning 398–565 (SRAPVVTIMG…AILLQSEILE (168 aa)) is the tr-type G domain. The interval 407–414 (GHVDHGKT) is G1. 407–414 (GHVDHGKT) contributes to the GTP binding site. The segment at 432-436 (GITQH) is G2. Residues 453–456 (DTPG) are G3. GTP-binding positions include 453-457 (DTPGH) and 507-510 (NKID). Residues 507–510 (NKID) form a G4 region. Residues 543-545 (SAK) form a G5 region.

This sequence belongs to the TRAFAC class translation factor GTPase superfamily. Classic translation factor GTPase family. IF-2 subfamily.

Its subcellular location is the cytoplasm. Its function is as follows. One of the essential components for the initiation of protein synthesis. Protects formylmethionyl-tRNA from spontaneous hydrolysis and promotes its binding to the 30S ribosomal subunits. Also involved in the hydrolysis of GTP during the formation of the 70S ribosomal complex. The chain is Translation initiation factor IF-2 from Photobacterium profundum (strain SS9).